Here is a 321-residue protein sequence, read N- to C-terminus: Probable E3 ubiquitin-protein ligase BAH1-like 1 (321 aa).

The SPX domain occupies methionine 1–alanine 149. The segment at cysteine 217–arginine 266 adopts an RING-type zinc-finger fold.

This sequence belongs to the RING-type zinc finger family.

The enzyme catalyses S-ubiquitinyl-[E2 ubiquitin-conjugating enzyme]-L-cysteine + [acceptor protein]-L-lysine = [E2 ubiquitin-conjugating enzyme]-L-cysteine + N(6)-ubiquitinyl-[acceptor protein]-L-lysine.. Its pathway is protein modification; protein ubiquitination. This Oryza sativa subsp. indica (Rice) protein is Probable E3 ubiquitin-protein ligase BAH1-like 1.